A 291-amino-acid polypeptide reads, in one-letter code: Polyamine aminopropyltransferase (291 aa).

Positions 5 to 245 (PGPVSLIEPL…YAVNYIIGSL (241 aa)) constitute a PABS domain. Gln36 serves as a coordination point for S-methyl-5'-thioadenosine. Spermidine-binding residues include His67 and Glu91. S-methyl-5'-thioadenosine-binding positions include Asp111 and 143-144 (DG). Asp164 functions as the Proton acceptor in the catalytic mechanism.

It belongs to the spermidine/spermine synthase family. Homodimer or homotetramer.

The protein localises to the cytoplasm. It catalyses the reaction S-adenosyl 3-(methylsulfanyl)propylamine + putrescine = S-methyl-5'-thioadenosine + spermidine + H(+). It functions in the pathway amine and polyamine biosynthesis; spermidine biosynthesis; spermidine from putrescine: step 1/1. Its function is as follows. Catalyzes the irreversible transfer of a propylamine group from the amino donor S-adenosylmethioninamine (decarboxy-AdoMet) to putrescine (1,4-diaminobutane) to yield spermidine. The protein is Polyamine aminopropyltransferase of Pyrobaculum islandicum (strain DSM 4184 / JCM 9189 / GEO3).